Here is a 50-residue protein sequence, read N- to C-terminus: Large ribosomal subunit protein bL36B (50 aa).

This sequence belongs to the bacterial ribosomal protein bL36 family.

The chain is Large ribosomal subunit protein bL36B from Pseudomonas aeruginosa (strain UCBPP-PA14).